Reading from the N-terminus, the 136-residue chain is Histone H3.2 (136 aa).

Positions Met1–Gln20 are disordered. Lys5 is subject to N6-methylated lysine. Lys10 is subject to N6-acetyllysine; alternate. Lys10 bears the N6-methylated lysine; alternate mark. Ser11 is modified (phosphoserine). Phosphothreonine is present on Thr12. Lys15 is subject to N6-acetyllysine. Lys19 and Lys24 each carry N6-acetyllysine; alternate. An N6-methylated lysine; alternate mark is found at Lys19 and Lys24. The residue at position 37 (Lys37) is an N6-methylated lysine.

Belongs to the histone H3 family. As to quaternary structure, the nucleosome is a histone octamer containing two molecules each of H2A, H2B, H3 and H4 assembled in one H3-H4 heterotetramer and two H2A-H2B heterodimers. The octamer wraps approximately 147 bp of DNA. Acetylation is generally linked to gene activation. Can be acetylated to form H3K9ac, H3K14ac, H3K18ac and H3K23ac. H3K9ac could compete with H3K9me and prevent gene silencing. H3K9ac is restricted to euchromatin. Post-translationally, methylated to form mainly H3K4me, H3K9me, H3K18me, H3K23me and H3K36me. H3K4me1/2/3, H3K9me3 and H3K36me1/2/3 are typical marks for euchromatin, whereas heterochromatic chromocenters are enriched in H3K9me1/2. H2BK143ub1 is probably prerequisite for H3K4me. In terms of processing, can be phosphorylated to form H3S10ph and H3T11ph.

The protein resides in the nucleus. The protein localises to the chromosome. Functionally, core component of nucleosome. Nucleosomes wrap and compact DNA into chromatin, limiting DNA accessibility to the cellular machineries which require DNA as a template. Histones thereby play a central role in transcription regulation, DNA repair, DNA replication and chromosomal stability. DNA accessibility is regulated via a complex set of post-translational modifications of histones, also called histone code, and nucleosome remodeling. This Cichorium intybus (Chicory) protein is Histone H3.2.